Reading from the N-terminus, the 450-residue chain is Enolase (450 aa).

Position 167 (Q167) interacts with (2R)-2-phosphoglycerate. The Proton donor role is filled by E209. Mg(2+)-binding residues include D250, E307, and D334. (2R)-2-phosphoglycerate is bound by residues K359, R388, S389, and K410. K359 functions as the Proton acceptor in the catalytic mechanism.

This sequence belongs to the enolase family. Requires Mg(2+) as cofactor.

It localises to the cytoplasm. The protein resides in the secreted. The protein localises to the cell surface. It carries out the reaction (2R)-2-phosphoglycerate = phosphoenolpyruvate + H2O. Its pathway is carbohydrate degradation; glycolysis; pyruvate from D-glyceraldehyde 3-phosphate: step 4/5. In terms of biological role, catalyzes the reversible conversion of 2-phosphoglycerate (2-PG) into phosphoenolpyruvate (PEP). It is essential for the degradation of carbohydrates via glycolysis. 'Moonlights' as a plasminogen receptor and plasmin activator. Contributes to host (pig) cell adhesion; anti-enolase antibodies decrease binding to porcine kidney cells about 60%. Binds host plasminogen and fibronectin in vitro; enhances the activity of host tissue-specific plasminogen activator (tPA), and helps plasminogen and tPA degrade articifial host extracellular matrices. This is Enolase from Mesomycoplasma hyorhinis (strain HUB-1) (Mycoplasma hyorhinis).